The sequence spans 1145 residues: Cellulose synthase-like protein D3 (1145 aa).

The segment covering 1 to 19 has biased composition (polar residues); that stretch reads MASNNHFMNSRSNLSTNSD. Disordered stretches follow at residues 1–38 and 189–208; these read MASNNHFMNSRSNLSTNSDAAEAERHQQPVSNSVTFAR and DNNKQQRPMLPPPAGGSKMD. The next 2 membrane-spanning stretches (helical) occupy residues 289–309 and 319–339; these read VISPYRLLILIRIVVLALFLM and AIWLWGMSVVCELWFALSWLL. Asp-419 is a catalytic residue. Ser-755 bears the Phosphoserine mark. The active site involves Asp-848. The next 6 helical transmembrane spans lie at 930–950, 956–976, 1002–1022, 1045–1065, 1079–1099, and 1109–1129; these read FFLIVYCFLPALSLFSGQFIV, TFLVYLLIISITLCLLALLEI, LAAVIQGLLKVVAGIEISFTL, SLMIPPITIMMVNLIAIAVGF, LIGGVFFSFWVLAHLYPFAKG, and TIVYVWSGLVAITISLLWVAI.

This sequence belongs to the glycosyltransferase 2 family. Plant cellulose synthase-like D subfamily. In terms of tissue distribution, preferentially expressed in root hair cells. Expressed in roots, leaves, stems, flowers and siliques.

The protein localises to the golgi apparatus membrane. Functionally, thought to be a Golgi-localized beta-glycan synthase that polymerize the backbones of noncellulosic polysaccharides (hemicelluloses) of plant cell wall. Required for synthesis of a cell wall polysaccharide essential for root hair elongation, but not initiation. May be the functional ortholog of rice CSLD1. This Arabidopsis thaliana (Mouse-ear cress) protein is Cellulose synthase-like protein D3 (CSLD3).